The following is a 287-amino-acid chain: ATP synthase gamma chain (287 aa).

Belongs to the ATPase gamma chain family. As to quaternary structure, F-type ATPases have 2 components, CF(1) - the catalytic core - and CF(0) - the membrane proton channel. CF(1) has five subunits: alpha(3), beta(3), gamma(1), delta(1), epsilon(1). CF(0) has three main subunits: a, b and c.

Its subcellular location is the cell inner membrane. Produces ATP from ADP in the presence of a proton gradient across the membrane. The gamma chain is believed to be important in regulating ATPase activity and the flow of protons through the CF(0) complex. This chain is ATP synthase gamma chain, found in Geobacter metallireducens (strain ATCC 53774 / DSM 7210 / GS-15).